The following is a 105-amino-acid chain: NADH-quinone oxidoreductase subunit K (105 aa).

Transmembrane regions (helical) follow at residues 9–29 (PNYY…GVLV), 34–54 (IVLF…LVTF), and 65–85 (IIAF…LAII).

The protein belongs to the complex I subunit 4L family. As to quaternary structure, NDH-1 is composed of 14 different subunits. Subunits NuoA, H, J, K, L, M, N constitute the membrane sector of the complex.

The protein localises to the cell membrane. The catalysed reaction is a quinone + NADH + 5 H(+)(in) = a quinol + NAD(+) + 4 H(+)(out). NDH-1 shuttles electrons from NADH, via FMN and iron-sulfur (Fe-S) centers, to quinones in the respiratory chain. The immediate electron acceptor for the enzyme in this species is believed to be a menaquinone. Couples the redox reaction to proton translocation (for every two electrons transferred, four hydrogen ions are translocated across the cytoplasmic membrane), and thus conserves the redox energy in a proton gradient. This is NADH-quinone oxidoreductase subunit K from Salinispora arenicola (strain CNS-205).